Consider the following 182-residue polypeptide: Isopentenyl-diphosphate Delta-isomerase (182 aa).

Mn(2+) contacts are provided by His-25 and His-32. The Nudix hydrolase domain occupies 30 to 164 (RLHLAFSSWL…PWAFSPWMVM (135 aa)). Cys-67 is a catalytic residue. His-69 contributes to the Mn(2+) binding site. A Mg(2+)-binding site is contributed by Glu-87. The Mn(2+) site is built by Glu-114 and Glu-116. Residue Glu-116 is part of the active site.

This sequence belongs to the IPP isomerase type 1 family. In terms of assembly, homodimer. Mg(2+) is required as a cofactor. Requires Mn(2+) as cofactor.

It localises to the cytoplasm. It carries out the reaction isopentenyl diphosphate = dimethylallyl diphosphate. The protein operates within isoprenoid biosynthesis; dimethylallyl diphosphate biosynthesis; dimethylallyl diphosphate from isopentenyl diphosphate: step 1/1. In terms of biological role, catalyzes the 1,3-allylic rearrangement of the homoallylic substrate isopentenyl (IPP) to its highly electrophilic allylic isomer, dimethylallyl diphosphate (DMAPP). The chain is Isopentenyl-diphosphate Delta-isomerase from Escherichia coli O139:H28 (strain E24377A / ETEC).